The primary structure comprises 173 residues: ATP-dependent protease subunit HslV (173 aa).

The active site involves threonine 2. Residues glycine 157, cysteine 160, and threonine 163 each contribute to the Na(+) site.

This sequence belongs to the peptidase T1B family. HslV subfamily. A double ring-shaped homohexamer of HslV is capped on each side by a ring-shaped HslU homohexamer. The assembly of the HslU/HslV complex is dependent on binding of ATP.

It localises to the cytoplasm. It carries out the reaction ATP-dependent cleavage of peptide bonds with broad specificity.. Its activity is regulated as follows. Allosterically activated by HslU binding. Functionally, protease subunit of a proteasome-like degradation complex believed to be a general protein degrading machinery. This is ATP-dependent protease subunit HslV from Nitrosomonas eutropha (strain DSM 101675 / C91 / Nm57).